The sequence spans 431 residues: Argininosuccinate lyase (431 aa).

Belongs to the lyase 1 family. Argininosuccinate lyase subfamily.

It is found in the cytoplasm. It carries out the reaction 2-(N(omega)-L-arginino)succinate = fumarate + L-arginine. Its pathway is amino-acid biosynthesis; L-arginine biosynthesis; L-arginine from L-ornithine and carbamoyl phosphate: step 3/3. In Stenotrophomonas maltophilia (strain R551-3), this protein is Argininosuccinate lyase.